The sequence spans 482 residues: Pentatricopeptide repeat-containing protein At1g74900, mitochondrial (482 aa).

PPR repeat units follow at residues 90–124, 125–159, 160–190, 194–228, 229–263, 264–298, 299–333, 334–368, 369–403, 404–441, and 442–476; these read DASSFDLAIDIAARLHLHPTVWSLIHRMRSLRIGP, SPKTFAIVAERYASAGKPDKAVKLFLNMHEHGCFQ, DLASFNTILDVLCKSKRVEKAYELFRALRGR, DTVTYNVILNGWCLIKRTPKALEVLKEMVERGINP, NLTTYNTMLKGFFRAGQIRHAWEFFLEMKKRDCEI, DVVTYTTVVHGFGVAGEIKRARNVFDEMIREGVLP, SVATYNAMIQVLCKKDNVENAVVMFEEMVRRGYEP, NVTTYNVLIRGLFHAGEFSRGEELMQRMENEGCEP, NFQTYNMMIRYYSECSEVEKALGLFEKMGSGDCLP, NLDTYNILISGMFVRKRSEDMVVAGKLLLEMVERGFIP, and RKFTFNRVLNGLLLTGNQAFAKEILRLQSKSGSRL.

The protein belongs to the PPR family. P subfamily.

It is found in the mitochondrion. Functionally, required for the trans-splicing of intron 1 of the mitochondrial nad1 transcript encoding the ND1 subunit of the mitochondrial membrane respiratory chain NADH dehydrogenase (Complex I). The sequence is that of Pentatricopeptide repeat-containing protein At1g74900, mitochondrial (OTP43) from Arabidopsis thaliana (Mouse-ear cress).